The chain runs to 156 residues: Small ribosomal subunit protein uS7 (156 aa).

It belongs to the universal ribosomal protein uS7 family. As to quaternary structure, part of the 30S ribosomal subunit. Contacts proteins S9 and S11.

Its function is as follows. One of the primary rRNA binding proteins, it binds directly to 16S rRNA where it nucleates assembly of the head domain of the 30S subunit. Is located at the subunit interface close to the decoding center, probably blocks exit of the E-site tRNA. This is Small ribosomal subunit protein uS7 from Geobacter sp. (strain M21).